Consider the following 694-residue polypeptide: Elongation factor G (694 aa).

The tr-type G domain maps to 6 to 288 (KLYRNIGIAA…GVIEYLPSPT (283 aa)). GTP is bound by residues 15–22 (AHVDAGKT), 86–90 (DTPGH), and 140–143 (NKMD).

Belongs to the TRAFAC class translation factor GTPase superfamily. Classic translation factor GTPase family. EF-G/EF-2 subfamily.

The protein resides in the cytoplasm. Catalyzes the GTP-dependent ribosomal translocation step during translation elongation. During this step, the ribosome changes from the pre-translocational (PRE) to the post-translocational (POST) state as the newly formed A-site-bound peptidyl-tRNA and P-site-bound deacylated tRNA move to the P and E sites, respectively. Catalyzes the coordinated movement of the two tRNA molecules, the mRNA and conformational changes in the ribosome. In Legionella pneumophila (strain Corby), this protein is Elongation factor G.